The chain runs to 222 residues: Superoxide dismutase [Mn], mitochondrial (222 aa).

The N-terminal 24 residues, 1-24 (MLSRAVCGTGRQLAPALGYLGSRQ), are a transit peptide targeting the mitochondrion. Position 50 (H50) interacts with Mn(2+). The residue at position 58 (Y58) is a 3'-nitrotyrosine. 2 positions are modified to N6-acetyllysine; alternate: K68 and K75. Residues K68 and K75 each carry the N6-succinyllysine; alternate modification. H98 contacts Mn(2+). N6-acetyllysine is present on K114. N6-acetyllysine; alternate occurs at positions 122 and 130. An N6-succinyllysine; alternate mark is found at K122 and K130. Mn(2+) contacts are provided by D183 and H187. Position 202 is an N6-acetyllysine (K202).

The protein belongs to the iron/manganese superoxide dismutase family. As to quaternary structure, homotetramer. Mn(2+) is required as a cofactor. Post-translationally, nitrated under oxidative stress. Nitration coupled with oxidation inhibits the catalytic activity. In terms of processing, acetylation at Lys-122 decreases enzymatic activity. Deacetylated by SIRT3 upon exposure to ionizing radiations or after long fasting. Polyubiquitinated; leading to proteasomal degradation. Deubiquitinated by USP36 which increases protein stability.

Its subcellular location is the mitochondrion matrix. The catalysed reaction is 2 superoxide + 2 H(+) = H2O2 + O2. Its function is as follows. Destroys superoxide anion radicals which are normally produced within the cells and which are toxic to biological systems. The sequence is that of Superoxide dismutase [Mn], mitochondrial (SOD2) from Macaca nemestrina (Pig-tailed macaque).